Reading from the N-terminus, the 103-residue chain is Small ribosomal subunit protein uS10 (103 aa).

Belongs to the universal ribosomal protein uS10 family. As to quaternary structure, part of the 30S ribosomal subunit.

Functionally, involved in the binding of tRNA to the ribosomes. This chain is Small ribosomal subunit protein uS10, found in Shewanella frigidimarina (strain NCIMB 400).